A 212-amino-acid polypeptide reads, in one-letter code: MSLFDKKHLVSPADALPGRNTPMPVATLHAVNGHSMTNVPDGMEIAIFAMGCFWGVESLFWQLPGVYSTAAGYTGGYTPNPTYREVCSGDTGHAEAVRIVYDPSVISYEQLLQVFWENHDPAQGMRQGNDHGTQYRSAIYPLTPEQDAAARASLERFQAAMLAADDDRHITTEIANATPFYYAEDDHQQYLHKNPYGYCGIGGIGVCLPPEA.

Residue cysteine 52 is part of the active site.

The protein belongs to the MsrA Met sulfoxide reductase family.

It catalyses the reaction L-methionyl-[protein] + [thioredoxin]-disulfide + H2O = L-methionyl-(S)-S-oxide-[protein] + [thioredoxin]-dithiol. The enzyme catalyses [thioredoxin]-disulfide + L-methionine + H2O = L-methionine (S)-S-oxide + [thioredoxin]-dithiol. Functionally, has an important function as a repair enzyme for proteins that have been inactivated by oxidation. Catalyzes the reversible oxidation-reduction of methionine sulfoxide in proteins to methionine. This Shigella boydii serotype 18 (strain CDC 3083-94 / BS512) protein is Peptide methionine sulfoxide reductase MsrA.